We begin with the raw amino-acid sequence, 338 residues long: Phenylalanine--tRNA ligase alpha subunit (338 aa).

Glutamate 252 serves as a coordination point for Mg(2+).

It belongs to the class-II aminoacyl-tRNA synthetase family. Phe-tRNA synthetase alpha subunit type 1 subfamily. As to quaternary structure, tetramer of two alpha and two beta subunits. The cofactor is Mg(2+).

Its subcellular location is the cytoplasm. It catalyses the reaction tRNA(Phe) + L-phenylalanine + ATP = L-phenylalanyl-tRNA(Phe) + AMP + diphosphate + H(+). This chain is Phenylalanine--tRNA ligase alpha subunit, found in Mycoplasmoides gallisepticum (strain R(low / passage 15 / clone 2)) (Mycoplasma gallisepticum).